The following is a 335-amino-acid chain: Glucokinase (335 aa).

11–16 contacts ATP; it reads ADIGGT.

It belongs to the bacterial glucokinase family.

It localises to the cytoplasm. The enzyme catalyses D-glucose + ATP = D-glucose 6-phosphate + ADP + H(+). The polypeptide is Glucokinase (Stenotrophomonas maltophilia (strain K279a)).